Consider the following 212-residue polypeptide: HTH-type transcriptional repressor NicS (212 aa).

Residues 14 to 74 enclose the HTH tetR-type domain; the sequence is DRTRDNILKA…SVLEHIYASF (61 aa). The segment at residues 37-56 is a DNA-binding region (H-T-H motif); the sequence is RIEQISTLAKSNDRMIYYYF.

The protein operates within cofactor degradation; nicotinate degradation [regulation]. Transcriptional repressor for the nicAB operon, encoding the upper aerobic nicotinate degradation pathway. Acts under non-induced conditions: repression of the nicAB operon becomes alleviated in presence of either nicotinate or 6-hydroxynicotinate (6HNA). This is HTH-type transcriptional repressor NicS (nicS) from Pseudomonas putida (strain ATCC 47054 / DSM 6125 / CFBP 8728 / NCIMB 11950 / KT2440).